A 577-amino-acid polypeptide reads, in one-letter code: Isocitrate dehydrogenase kinase/phosphatase (577 aa).

ATP-binding positions include 318–324 and lysine 339; that span reads APGVRGM. The active site involves aspartate 374.

Belongs to the AceK family.

The protein localises to the cytoplasm. It carries out the reaction L-seryl-[isocitrate dehydrogenase] + ATP = O-phospho-L-seryl-[isocitrate dehydrogenase] + ADP + H(+). Its function is as follows. Bifunctional enzyme which can phosphorylate or dephosphorylate isocitrate dehydrogenase (IDH) on a specific serine residue. This is a regulatory mechanism which enables bacteria to bypass the Krebs cycle via the glyoxylate shunt in response to the source of carbon. When bacteria are grown on glucose, IDH is fully active and unphosphorylated, but when grown on acetate or ethanol, the activity of IDH declines drastically concomitant with its phosphorylation. This Pseudomonas aeruginosa (strain UCBPP-PA14) protein is Isocitrate dehydrogenase kinase/phosphatase.